A 185-amino-acid polypeptide reads, in one-letter code: Ribosome-recycling factor (185 aa).

The protein belongs to the RRF family.

The protein localises to the cytoplasm. Its function is as follows. Responsible for the release of ribosomes from messenger RNA at the termination of protein biosynthesis. May increase the efficiency of translation by recycling ribosomes from one round of translation to another. This Vibrio campbellii (strain ATCC BAA-1116) protein is Ribosome-recycling factor.